We begin with the raw amino-acid sequence, 868 residues long: Probable inorganic carbon transporter subunit DabA (868 aa).

The Zn(2+) site is built by cysteine 392, aspartate 394, histidine 574, and cysteine 589.

This sequence belongs to the inorganic carbon transporter (TC 9.A.2) DabA family. Forms a complex with DabB. Zn(2+) serves as cofactor.

It is found in the cell membrane. Functionally, part of an energy-coupled inorganic carbon pump. The polypeptide is Probable inorganic carbon transporter subunit DabA (Bacillus cereus (strain B4264)).